The sequence spans 771 residues: Leucine-rich repeat and fibronectin type III domain-containing protein 1 (771 aa).

The signal sequence occupies residues 1–31 (MAPGPFSSALLSPPPAALPFLLLLWAGASRG). The LRRNT domain occupies 32-65 (QPCPGRCICQNVAPTLTMLCAKTGLLFVPPAIDR). Residues 32 to 536 (QPCPGRCICQ…LRAHFLGGTM (505 aa)) are Extracellular-facing. LRR repeat units follow at residues 66-87 (RVVE…DFAN), 90-111 (SLVH…AFAD), 114-135 (ALRA…QLRG), 138-159 (NLRH…AFDA), 163-184 (TVED…AVGQ), 187-208 (NLNT…TFVQ), and 211-232 (KLVR…GLFL). Asparagine 87 carries N-linked (GlcNAc...) asparagine glycosylation. Positions 252 to 298 (NPLHCNCELLWLRRLTREDDLETCATPEHLTDRYFWSIPEEEFLCEP) constitute an LRRCT domain. The region spanning 299–386 (PLITRQAGGR…GEATAPVEVC (88 aa)) is the Ig-like domain. Cysteine 321 and cysteine 370 are disulfide-bonded. Asparagine 343 is a glycosylation site (N-linked (GlcNAc...) asparagine). The segment at 397–422 (PAAPPPLTEPGSSDIATPGRPGANDS) is disordered. Residues 424–520 (AERRLVAAEL…GCVQFTTAGD (97 aa)) enclose the Fibronectin type-III domain. A helical transmembrane segment spans residues 537-557 (IIAIGGVIVASVLVFIVLLMI). At 558–771 (RYKVYGDGDS…STEWMLESTV (214 aa)) the chain is on the cytoplasmic side. Phosphoserine occurs at positions 613 and 718. The interval 654 to 743 (PSEETSGEES…HLDGAGGGAA (90 aa)) is disordered. Residues 719-732 (YPRRARRTKRHRST) show a composition bias toward basic residues. Positions 768 to 771 (ESTV) match the PDZ-binding motif.

The protein belongs to the LRFN family. Can form heteromeric complexes with LRFN2, LRFN3, LRFN4 and LRFN5. Forms homomeric complexes, but not across cell junctions. Interacts with DLG1, DLG2, DLG3 and DLG4. Interacts with 2 AMPA receptor subunits GRIA1 and GRIA2 and NMDA receptor subunit GRIN1. In terms of processing, glycosylated.

The protein localises to the membrane. The protein resides in the synapse. It localises to the postsynaptic density membrane. Functionally, promotes neurite outgrowth in hippocampal neurons. Involved in the regulation and maintenance of excitatory synapses. Induces the clustering of excitatory postsynaptic proteins, including DLG4, DLGAP1, GRIA1 and GRIN1. This is Leucine-rich repeat and fibronectin type III domain-containing protein 1 (LRFN1) from Homo sapiens (Human).